The primary structure comprises 471 residues: Alpha-galactosidase 2 (471 aa).

Residues 1–18 (MFAFYFLTACISLKGVFG) form the signal peptide. Cysteine 42 and cysteine 74 are disulfide-bonded. Residues aspartate 72 and aspartate 73 each contribute to the substrate site. Asparagine 105 carries N-linked (GlcNAc...) asparagine glycosylation. An intrachain disulfide couples cysteine 121 to cysteine 151. Residue lysine 147 participates in substrate binding. The Nucleophile role is filled by aspartate 149. Residue asparagine 175 is glycosylated (N-linked (GlcNAc...) asparagine). A substrate-binding site is contributed by arginine 205. Residue aspartate 209 is the Proton donor of the active site. 2 disulfide bridges follow: cysteine 221-cysteine 237 and cysteine 223-cysteine 230. Glutamine 251 is a binding site for substrate. N-linked (GlcNAc...) asparagine glycans are attached at residues asparagine 270, asparagine 370, asparagine 403, asparagine 413, asparagine 422, asparagine 435, and asparagine 454.

This sequence belongs to the glycosyl hydrolase 27 family. Homotetramer.

The protein resides in the secreted. The enzyme catalyses Hydrolysis of terminal, non-reducing alpha-D-galactose residues in alpha-D-galactosides, including galactose oligosaccharides, galactomannans and galactolipids.. This is Alpha-galactosidase 2 (MEL2) from Saccharomyces cerevisiae (Baker's yeast).